We begin with the raw amino-acid sequence, 858 residues long: DNA replication licensing factor mcm4-A (858 aa).

The disordered stretch occupies residues 1 to 125 (MSSPTSTPSR…ARKVKQVDLH (125 aa)). 2 stretches are compositionally biased toward polar residues: residues 54 to 68 (SPSG…SSPA) and 79 to 94 (LDLS…SSRV). The C4-type zinc-finger motif lies at 301–326 (CQVCAFTTRVEIDRGRIAEPSVCKHC). One can recognise an MCM domain in the interval 453–662 (IYERLAAALA…YDRRLAHHLV (210 aa)). Y466, R492, K511, S512, N613, R638, R727, and E730 together coordinate ATP. An Arginine finger motif is present at residues 637-640 (SRFD).

This sequence belongs to the MCM family. In terms of assembly, component of the mcm2-7 complex (RLF-M). The complex forms a toroidal hexameric ring with the proposed subunit order mcm2-mcm6-mcm4-mcm7-mcm3-mcm5. The heterodimer of mmcm3/mcm5 interacts with mcm4, mmcm6, mcm7 and weakly with mcm2. Component of the CMG helicase complex, composed of the mcm2-7 complex, the GINS complex and cdc45. Hyperphosphorylated during mitosis in a mechanism requiring cdc2-cyclin B and other kinases. Undergoes dephosphorylation after exiting mitosis, existing in a partially phosphorylated state in the cytosolic interphase mcm complex which associates with the pre-replication complexes (pre-Rcs). Complete dephosphorylation inactivates the mcm complex, preventing its binding to chromatin. Becomes actively phosphorylated during S phase once the mcm complex is assembled on the chromatin. This chromatin-associated phosphorylation occurs during the activation of the pre-Rcs and is independent of cdks. Phosphorylated by the cdc7-dbf4b complex.

Its subcellular location is the nucleus. It localises to the chromosome. The catalysed reaction is ATP + H2O = ADP + phosphate + H(+). Functionally, acts as a component of the MCM2-7 complex (MCM complex) which is the replicative helicase essential for 'once per cell cycle' DNA replication initiation and elongation in eukaryotic cells. Core component of CDC45-MCM-GINS (CMG) helicase, the molecular machine that unwinds template DNA during replication, and around which the replisome is built. The active ATPase sites in the MCM2-7 ring are formed through the interaction surfaces of two neighboring subunits such that a critical structure of a conserved arginine finger motif is provided in trans relative to the ATP-binding site of the Walker A box of the adjacent subunit. The six ATPase active sites, however, are likely to contribute differentially to the complex helicase activity. The sequence is that of DNA replication licensing factor mcm4-A (mcm4-a) from Xenopus laevis (African clawed frog).